The following is a 1741-amino-acid chain: DNA-directed RNA polymerase III subunit RPC1 (1741 aa).

7 residues coordinate Zn(2+): C79, C82, C89, H92, C119, C122, and C160. D722, D724, and D726 together coordinate Mg(2+). Residues 1099 to 1111 (PFEFLAHARAGRD) are bridging helix. Residues 1719-1741 (RHANKRSWSRGKERHASLKPKNR) form a disordered region.

It belongs to the RNA polymerase beta' chain family. In terms of assembly, component of the RNA polymerase III (Pol III) complex consisting of 17 subunits.

It is found in the nucleus. It carries out the reaction RNA(n) + a ribonucleoside 5'-triphosphate = RNA(n+1) + diphosphate. Functionally, DNA-dependent RNA polymerase catalyzes the transcription of DNA into RNA using the four ribonucleoside triphosphates as substrates. Largest and catalytic core component of RNA polymerase III which synthesizes small RNAs, such as 5S rRNA and tRNAs. Forms the polymerase active center together with the second largest subunit. A single-stranded DNA template strand of the promoter is positioned within the central active site cleft of Pol III. A bridging helix emanates from RPC1 and crosses the cleft near the catalytic site and is thought to promote translocation of Pol III by acting as a ratchet that moves the RNA-DNA hybrid through the active site by switching from straight to bent conformations at each step of nucleotide addition. This chain is DNA-directed RNA polymerase III subunit RPC1 (RPOA3), found in Giardia intestinalis (Giardia lamblia).